The sequence spans 1108 residues: Retinal guanylyl cyclase 2 (1108 aa).

Positions 1–50 are cleaved as a signal peptide; the sequence is MFLGPWPFSRLLSWFAISSRLSGQHGLPSSKFLRCLCLLALLPLLRWGQA. Residues 51-469 are Extracellular-facing; the sequence is LPYKIGVIGP…CQGGIDPALA (419 aa). The cysteines at positions 104 and 132 are disulfide-linked. A helical transmembrane segment spans residues 470–490; the sequence is MMVCFALLIALLSINGFAYFI. Residues 491–1108 are Cytoplasmic-facing; the sequence is RRRINKIQLI…AERQLVRNKP (618 aa). In terms of domain architecture, Protein kinase spans 532–812; sequence FQIISEVQSG…DEIFNQFKTF (281 aa). In terms of domain architecture, Guanylate cyclase spans 884–1014; it reads TLYFSDIVGF…DTVNTASRME (131 aa).

It belongs to the adenylyl cyclase class-4/guanylyl cyclase family. Homodimer. Interacts with RD3; promotes the exit of GUCY2F from the endoplasmic reticulum and its trafficking to the photoreceptor outer segments. There are 9 conserved cysteine residues in sensory guanylate cyclases, 6 in the extracellular domain, which may be involved in intra- or interchain disulfide bonds. In terms of tissue distribution, retina.

It is found in the membrane. The protein resides in the photoreceptor outer segment membrane. The catalysed reaction is GTP = 3',5'-cyclic GMP + diphosphate. With respect to regulation, activated by GUCA1B when free calcium ions concentration is low, and inhibited by GUCA1B when free calcium ions concentration is high. Inhibited by RD3. Responsible for the synthesis of cyclic GMP (cGMP) in rods and cones of photoreceptors. Plays an essential role in phototransduction, by mediating cGMP replenishment. May also participate in the trafficking of membrane-asociated proteins to the photoreceptor outer segment membrane. In Mus musculus (Mouse), this protein is Retinal guanylyl cyclase 2.